The primary structure comprises 1159 residues: Ferroxidase HEPHL1 (1159 aa).

Positions 1-24 (MPRKQPAGCIFLLTFLGLSGLVGT) are cleaved as a signal peptide. 6 Plastocyanin-like domains span residues 25–207 (VTRT…LLVC), 218–366 (TRND…VDNC), 379–561 (QRRY…LLVC), 571–719 (TQKG…VSSC), 731–907 (MIRT…LITC), and 915–1092 (KGRR…VPSN). Topologically, residues 25–1114 (VTRTYYIGIV…KNLGPTGAKA (1090 aa)) are extracellular. Cu cation contacts are provided by His127 and His129. Asn161 carries an N-linked (GlcNAc...) asparagine glycan. Cys181 and Cys207 form a disulfide bridge. Residues His187 and His189 each coordinate Cu cation. N-linked (GlcNAc...) asparagine glycosylation occurs at Asn236. Cys285 and Cys366 are disulfide-bonded. Residues His304, Cys347, and His352 each contribute to the Cu cation site. Asn407 carries an N-linked (GlcNAc...) asparagine glycan. Cys535 and Cys561 are disulfide-bonded. The N-linked (GlcNAc...) asparagine glycan is linked to Asn589. Cys638 and Cys719 are joined by a disulfide. Positions 657, 700, 705, and 710 each coordinate Cu cation. An N-linked (GlcNAc...) asparagine glycan is attached at Asn772. A disulfide bond links Cys881 and Cys907. An N-linked (GlcNAc...) asparagine glycan is attached at Asn935. His1003, His1006, His1008, His1048, Cys1049, His1050, His1054, and Met1059 together coordinate Cu cation. The helical transmembrane segment at 1115-1135 (ALVILFIIGLLLLITTVILSL) threads the bilayer. The Cytoplasmic segment spans residues 1136–1159 (RLCSAMKQTDYQQVQSCALPTDAL).

The protein belongs to the multicopper oxidase family. Requires Cu cation as cofactor.

Its subcellular location is the membrane. The enzyme catalyses 4 Fe(2+) + O2 + 4 H(+) = 4 Fe(3+) + 2 H2O. Its function is as follows. Is a copper-binding glycoprotein with ferroxidase activity. It oxidizes Fe(2+) to Fe(3+) without releasing radical oxygen species. May be involved in the regulation of intracellular iron content. This is Ferroxidase HEPHL1 (HEPHL1) from Homo sapiens (Human).